We begin with the raw amino-acid sequence, 308 residues long: Aliphatic nitrilase (308 aa).

Residues 4–270 (FRAAVVQAAP…ETILTADLDT (267 aa)) form the CN hydrolase domain. The active-site Proton acceptor is glutamate 44. Lysine 130 is a catalytic residue. Cysteine 164 (nucleophile) is an active-site residue.

The protein belongs to the carbon-nitrogen hydrolase superfamily. Nitrilase family.

It carries out the reaction a nitrile + 2 H2O = a carboxylate + NH4(+). In terms of biological role, nitrilase that hydrolyzes preferentially phenylacetonitrile, but not (R,S)-mandelonitrile. Also acts on dinitriles like phenylenediacetonitriles (PDAs) 1,2-PDA, 1,3-PDA, and 1,4-PDA, and cyanophenyl acetonitriles (CPAs) 2-CPA and 4-CPA, but with lower activities. The sequence is that of Aliphatic nitrilase (nit) from Sinorhizobium fredii (strain HH103).